The primary structure comprises 86 residues: Small muscular protein (86 aa).

A disordered region spans residues M20–P64.

This sequence belongs to the SMPX family.

Its function is as follows. Plays a role in the regulatory network through which muscle cells coordinate their structural and functional states during growth, adaptation, and repair. The polypeptide is Small muscular protein (SMPX) (Pongo abelii (Sumatran orangutan)).